The sequence spans 500 residues: L-arabinose isomerase (500 aa).

Mn(2+)-binding residues include Glu-306, Glu-333, His-350, and His-450.

It belongs to the arabinose isomerase family. In terms of assembly, homohexamer. Mn(2+) is required as a cofactor.

It catalyses the reaction beta-L-arabinopyranose = L-ribulose. Its pathway is carbohydrate degradation; L-arabinose degradation via L-ribulose; D-xylulose 5-phosphate from L-arabinose (bacterial route): step 1/3. Catalyzes the conversion of L-arabinose to L-ribulose. This is L-arabinose isomerase from Shigella flexneri serotype 5b (strain 8401).